We begin with the raw amino-acid sequence, 181 residues long: Shikimate kinase 2 (181 aa).

Residue 12 to 17 (GCGKTT) coordinates ATP. The Mg(2+) site is built by Thr-16 and Asp-32. 3 residues coordinate substrate: Asp-34, Arg-58, and Gly-79. Residues 112–126 (EAEPEVGLRPTLTGK) form an LID domain region. Arg-120 contributes to the ATP binding site. Arg-139 is a substrate binding site.

It belongs to the shikimate kinase family. AroL subfamily. Monomer. It depends on Mg(2+) as a cofactor.

It is found in the cytoplasm. The catalysed reaction is shikimate + ATP = 3-phosphoshikimate + ADP + H(+). Its pathway is metabolic intermediate biosynthesis; chorismate biosynthesis; chorismate from D-erythrose 4-phosphate and phosphoenolpyruvate: step 5/7. In terms of biological role, catalyzes the specific phosphorylation of the 3-hydroxyl group of shikimic acid using ATP as a cosubstrate. This Escherichia fergusonii (strain ATCC 35469 / DSM 13698 / CCUG 18766 / IAM 14443 / JCM 21226 / LMG 7866 / NBRC 102419 / NCTC 12128 / CDC 0568-73) protein is Shikimate kinase 2.